The chain runs to 93 residues: Mammaglobin-A (93 aa).

The signal sequence occupies residues 1-18 (MKLLMVLMLAALSQHCYA). 2 N-linked (GlcNAc...) asparagine glycosylation sites follow: Asn-53 and Asn-68.

This sequence belongs to the secretoglobin family. Lipophilin subfamily. In terms of tissue distribution, mammary gland specific. Over-expressed in breast cancer.

Its subcellular location is the secreted. In Homo sapiens (Human), this protein is Mammaglobin-A (SCGB2A2).